The chain runs to 302 residues: Glutamate/aspartate import solute-binding protein (302 aa).

A signal peptide spans 1–22 (MQLRKPATAILALALSAGLAQA).

It belongs to the bacterial solute-binding protein 3 family. In terms of assembly, the complex is composed of two ATP-binding proteins (GltL), two transmembrane proteins (GltJ and GltK) and a solute-binding protein (GltI).

Its subcellular location is the periplasm. Part of the ABC transporter complex GltIJKL involved in glutamate and aspartate uptake. Binds to both glutamate and aspartate. The chain is Glutamate/aspartate import solute-binding protein (gltI) from Escherichia coli (strain K12).